The primary structure comprises 368 residues: Chorismate synthase (368 aa).

Position 46 (Arg46) interacts with NADP(+). Residues Arg123 to Ser125, Asn240 to Ala241, Gly285, Lys300 to Thr304, and Arg326 contribute to the FMN site.

It belongs to the chorismate synthase family. In terms of assembly, homotetramer. FMNH2 is required as a cofactor.

The catalysed reaction is 5-O-(1-carboxyvinyl)-3-phosphoshikimate = chorismate + phosphate. Its pathway is metabolic intermediate biosynthesis; chorismate biosynthesis; chorismate from D-erythrose 4-phosphate and phosphoenolpyruvate: step 7/7. Its function is as follows. Catalyzes the anti-1,4-elimination of the C-3 phosphate and the C-6 proR hydrogen from 5-enolpyruvylshikimate-3-phosphate (EPSP) to yield chorismate, which is the branch point compound that serves as the starting substrate for the three terminal pathways of aromatic amino acid biosynthesis. This reaction introduces a second double bond into the aromatic ring system. The polypeptide is Chorismate synthase (Porphyromonas gingivalis (strain ATCC BAA-308 / W83)).